Here is a 286-residue protein sequence, read N- to C-terminus: Ribose-5-phosphate isomerase (286 aa).

It belongs to the ribose 5-phosphate isomerase family.

It is found in the cytoplasm. The catalysed reaction is aldehydo-D-ribose 5-phosphate = D-ribulose 5-phosphate. It participates in carbohydrate degradation; pentose phosphate pathway; D-ribose 5-phosphate from D-ribulose 5-phosphate (non-oxidative stage): step 1/1. The chain is Ribose-5-phosphate isomerase (RKI1) from Mycosarcoma maydis (Corn smut fungus).